Reading from the N-terminus, the 126-residue chain is Holo-[acyl-carrier-protein] synthase (126 aa).

Aspartate 9 and glutamate 58 together coordinate Mg(2+).

This sequence belongs to the P-Pant transferase superfamily. AcpS family. In terms of assembly, homodimer. Mg(2+) serves as cofactor.

Its subcellular location is the cytoplasm. It catalyses the reaction apo-[ACP] + CoA = holo-[ACP] + adenosine 3',5'-bisphosphate + H(+). Its function is as follows. Transfers the 4'-phosphopantetheine moiety from coenzyme A to the 'Ser-36' of acyl-carrier-protein. The sequence is that of Holo-[acyl-carrier-protein] synthase from Escherichia coli O157:H7.